We begin with the raw amino-acid sequence, 317 residues long: Protease 7 (317 aa).

An N-terminal signal peptide occupies residues 1 to 20 (MRAKLLGIVLTTPIAISSFA). Residues 21-31 (STETLSFTPDN) are Periplasmic-facing. Residues 32 to 41 (INADISLGTL) form a beta stranded membrane-spanning segment. The Extracellular segment spans residues 42 to 69 (SGKTKERVYLAEEGGRKVSQLDWKFNNA). A beta stranded transmembrane segment spans residues 70-78 (AIIKGAINW). The Periplasmic portion of the chain corresponds to 79–83 (DLMPQ). The chain crosses the membrane as a beta stranded span at residues 84-92 (ISIGAAGWT). Over 93–130 (TLGSRGGNMVDQDWMDSSNPGTWTDESRHPDTQLNYAN) the chain is Extracellular. Catalysis depends on residues Asp-103 and Asp-105. The beta stranded transmembrane segment at 131 to 140 (EFDLNIKGWL) threads the bilayer. The Periplasmic portion of the chain corresponds to 141 to 145 (LNEPN). A beta stranded transmembrane segment spans residues 146–156 (YRLGLMAGYQE). Over 157 to 197 (SRYSFTARGGSYIYSSEEGFRDDIGSFPNGERAIGYKQRFK) the chain is Extracellular. The beta stranded transmembrane segment at 198 to 209 (MPYIGLTGSYRY) threads the bilayer. The Periplasmic portion of the chain corresponds to 210–211 (ED). The chain crosses the membrane as a beta stranded span at residues 212–221 (FELGGTFKYS). The Extracellular segment spans residues 222-250 (GWVEASDNDEHYDPGKRITYRSKVKDQNY). Catalysis depends on residues Asp-230 and His-232. The beta stranded transmembrane segment at 251-261 (YSVSVNAGYYV) threads the bilayer. The Periplasmic segment spans residues 262 to 264 (TPN). A beta stranded transmembrane segment spans residues 265–274 (AKVYVEGTWN). The Extracellular segment spans residues 275–306 (RVTNKKGNTSLYDHNDNTSDYSKNGAGIENYN). The beta stranded transmembrane segment at 307–316 (FITTAGLKYT) threads the bilayer. Position 317 (Phe-317) is a topological domain, periplasmic.

It belongs to the peptidase A26 family. As to quaternary structure, homopentamer.

The protein resides in the cell outer membrane. The catalysed reaction is Has a virtual requirement for Arg in the P1 position and a slightly less stringent preference for this residue in the P1' position, which can also contain Lys, Gly or Val.. Inhibited by zinc. Its function is as follows. Protease that can cleave T7 RNA polymerase, ferric enterobactin receptor protein (FEP), antimicrobial peptide protamine and other proteins. This protease has a specificity for paired basic residues. This Escherichia coli O157:H7 protein is Protease 7 (ompT).